A 340-amino-acid polypeptide reads, in one-letter code: ATPase BagA (340 aa).

8 residues coordinate ATP: Gly31, Gly33, Lys34, Ser35, Thr36, Asn240, Pro316, and Val318.

This sequence belongs to the arsA ATPase family. BagA/BagB subfamily. As to quaternary structure, forms a heterodimer composed of BagA and BagB. Interacts with Rv1509. Also interacts with a large number of proteins, including proteins required for mycolic acid biosynthesis.

With respect to regulation, the ATPase activity of the BagAB complex is not stimulated by antimonite, an arsenite substitute, suggesting that BagAB is not a transporter for this family of elements. In terms of biological role, component of the heterodimeric BagAB ATPase complex, whose two subunits are actively involved in ATP hydrolysis. The ATPase activity is required to mediate resistance against nitric oxide (NO) and elevated levels of glycerol. The protein is ATPase BagA of Mycobacterium tuberculosis (strain ATCC 25618 / H37Rv).